The following is a 150-amino-acid chain: Group IIC secretory phospholipase A2 (150 aa).

Positions 1 to 20 (MKGIAVFLVFIFCWTTSTLS) are cleaved as a signal peptide. 8 disulfides stabilise this stretch: Cys46–Cys143, Cys48–Cys64, Cys63–Cys121, Cys69–Cys150, Cys70–Cys114, Cys79–Cys107, Cys97–Cys112, and Cys99–Cys105. Tyr47, Gly49, and Gly51 together coordinate Ca(2+). His67 is an active-site residue. Asp68 is a Ca(2+) binding site. Residue Asn92 is glycosylated (N-linked (GlcNAc...) asparagine). The active site involves Asp115.

It belongs to the phospholipase A2 family. Ca(2+) is required as a cofactor.

It is found in the secreted. It carries out the reaction a 1,2-diacyl-sn-glycero-3-phosphocholine + H2O = a 1-acyl-sn-glycero-3-phosphocholine + a fatty acid + H(+). PA2 catalyzes the calcium-dependent hydrolysis of the 2-acyl groups in 3-sn-phosphoglycerides. In Rattus norvegicus (Rat), this protein is Group IIC secretory phospholipase A2 (Pla2g2c).